The chain runs to 267 residues: Low affinity immunoglobulin gamma Fc region receptor III (267 aa).

The first 36 residues, 1–36, serve as a signal peptide directing secretion; the sequence is MTLETQMFQNAHSGSQWLLPPLTMLLLFAFADRQTA. The Extracellular portion of the chain corresponds to 37–221; it reads NLPKAVVKRD…STSSLVWFHA (185 aa). Ig-like C2-type domains are found at residues 39–121 and 122–204; these read PKAV…EVIS and DWLL…VTIT. 2 disulfides stabilise this stretch: C62/C104 and C143/C187. N-linked (GlcNAc...) asparagine glycans are attached at residues N70, N78, N97, N171, and N178. The helical transmembrane segment at 222–241 threads the bilayer; sequence AFCLVMCLLFAVDTGLYFCV. The Cytoplasmic segment spans residues 242 to 267; the sequence is RRNLQTSGEDWRKSLSVGKYKAPQDK.

In terms of assembly, may form multisubunit complex with other heteroproteins. This association is required for efficient cell-surface expression. Does not associate with CD3 zeta. In terms of tissue distribution, expressed on natural killer cells and macrophages.

The protein resides in the cell membrane. Receptor for the Fc region of complexed immunoglobulins gamma. Low affinity receptor which binds to IgG1, IgG2a and IgG2b. Mediates neutrophil activation by IgG complexes redundantly with Fcgr4. The sequence is that of Low affinity immunoglobulin gamma Fc region receptor III (Fcgr3) from Rattus norvegicus (Rat).